A 518-amino-acid polypeptide reads, in one-letter code: GMP synthase [glutamine-hydrolyzing] (518 aa).

In terms of domain architecture, Glutamine amidotransferase type-1 spans 11 to 203; it reads SILVLDFGSQ…AFDVCQAEAN (193 aa). Cysteine 88 functions as the Nucleophile in the catalytic mechanism. Catalysis depends on residues histidine 177 and glutamate 179. The GMPS ATP-PPase domain occupies 204-393; the sequence is WSMDDFIDMQ…LGMPSDLVWR (190 aa). 231–237 contacts ATP; the sequence is SGGVDSS.

In terms of assembly, homodimer.

It catalyses the reaction XMP + L-glutamine + ATP + H2O = GMP + L-glutamate + AMP + diphosphate + 2 H(+). It participates in purine metabolism; GMP biosynthesis; GMP from XMP (L-Gln route): step 1/1. In terms of biological role, catalyzes the synthesis of GMP from XMP. This Lactiplantibacillus plantarum (strain ATCC BAA-793 / NCIMB 8826 / WCFS1) (Lactobacillus plantarum) protein is GMP synthase [glutamine-hydrolyzing].